The chain runs to 451 residues: TERF1-interacting nuclear factor 2 (451 aa).

An N-acetylalanine modification is found at A2. The disordered stretch occupies residues 229 to 257 (NPLPKAKPGTHLPQGPSSRTHPEPLAGRH). The short motif at 256-278 (RHFNLAPLGRRRVQSQWASTRGG) is the TBM element. A Nuclear localization signal motif is present at residues 262 to 268 (PLGRRRV). Residue S295 is modified to Phosphoserine. Glycyl lysine isopeptide (Lys-Gly) (interchain with G-Cter in SUMO2) cross-links involve residues K302, K306, K341, and K353.

In terms of assembly, monomer. Found in a complex with POT1; TERF1 and TNKS1. Component of the shelterin complex (telosome) composed of TERF1, TERF2, TINF2, TERF2IP ACD and POT1. Interacts with TERF1, TERF2 and ACD. As to expression, detected in heart, brain, placenta, lung, liver, skeletal muscle, kidney and pancreas.

The protein resides in the nucleus. Its subcellular location is the chromosome. It is found in the telomere. The protein localises to the nucleus matrix. In terms of biological role, component of the shelterin complex (telosome) that is involved in the regulation of telomere length and protection. Shelterin associates with arrays of double-stranded TTAGGG repeats added by telomerase and protects chromosome ends; without its protective activity, telomeres are no longer hidden from the DNA damage surveillance and chromosome ends are inappropriately processed by DNA repair pathways. Plays a role in shelterin complex assembly. Isoform 1 may have additional role in tethering telomeres to the nuclear matrix. In Homo sapiens (Human), this protein is TERF1-interacting nuclear factor 2 (TINF2).